The chain runs to 390 residues: GTPase Obg (390 aa).

The region spanning 1-159 (MKFVDEATIL…RDLQLELMLL (159 aa)) is the Obg domain. Residues 127–146 (NTRFKSSVNRTPRQKTMGTP) are disordered. Positions 129 to 143 (RFKSSVNRTPRQKTM) are enriched in polar residues. In terms of domain architecture, OBG-type G spans 160–333 (ADVGMLGMPN…LCWDVMHFII (174 aa)). GTP is bound by residues 166–173 (GMPNAGKS), 191–195 (FTTLV), 213–216 (DIPG), 283–286 (NKID), and 314–316 (SAA). Residues Ser-173 and Thr-193 each coordinate Mg(2+). The span at 364-384 (MEAEAEEEWDDDWDEDDDEGV) shows a compositional bias: acidic residues. The disordered stretch occupies residues 364–390 (MEAEAEEEWDDDWDEDDDEGVEIVYQR).

It belongs to the TRAFAC class OBG-HflX-like GTPase superfamily. OBG GTPase family. Monomer. Mg(2+) is required as a cofactor.

It localises to the cytoplasm. An essential GTPase which binds GTP, GDP and possibly (p)ppGpp with moderate affinity, with high nucleotide exchange rates and a fairly low GTP hydrolysis rate. Plays a role in control of the cell cycle, stress response, ribosome biogenesis and in those bacteria that undergo differentiation, in morphogenesis control. The sequence is that of GTPase Obg from Cronobacter sakazakii (strain ATCC BAA-894) (Enterobacter sakazakii).